A 143-amino-acid chain; its full sequence is Small ribosomal subunit protein bS18 (143 aa).

Residues 1–72 (MARPDMGGPK…RGGEEGGRRG (72 aa)) form a disordered region. Over residues 10-50 (KSSGGFGGPRSGGGFGGGGYGGGGGGGGGYGGGGGGGFGGR) the composition is skewed to gly residues. Residues 51-70 (GGDRGDRGDRDDRGGEEGGR) show a composition bias toward basic and acidic residues.

It belongs to the bacterial ribosomal protein bS18 family. Part of the 30S ribosomal subunit. Forms a tight heterodimer with protein bS6.

Binds as a heterodimer with protein bS6 to the central domain of the 16S rRNA, where it helps stabilize the platform of the 30S subunit. The sequence is that of Small ribosomal subunit protein bS18 from Anaeromyxobacter sp. (strain Fw109-5).